Reading from the N-terminus, the 451-residue chain is Tubulin alpha-3 chain (451 aa).

Q11 contacts GTP. K40 carries the post-translational modification N6-acetyllysine. E71, S140, G144, T145, T179, N206, and N228 together coordinate GTP. E71 serves as a coordination point for Mg(2+). E254 is an active-site residue.

Belongs to the tubulin family. In terms of assembly, dimer of alpha and beta chains. A typical microtubule is a hollow water-filled tube with an outer diameter of 25 nm and an inner diameter of 15 nM. Alpha-beta heterodimers associate head-to-tail to form protofilaments running lengthwise along the microtubule wall with the beta-tubulin subunit facing the microtubule plus end conferring a structural polarity. Microtubules usually have 13 protofilaments but different protofilament numbers can be found in some organisms and specialized cells. Mg(2+) is required as a cofactor. In terms of processing, undergoes a tyrosination/detyrosination cycle, the cyclic removal and re-addition of a C-terminal tyrosine residue by the enzymes tubulin tyrosine carboxypeptidase (TTCP) and tubulin tyrosine ligase (TTL), respectively. Acetylation of alpha chains at Lys-40 stabilizes microtubules and affects affinity and processivity of microtubule motors. This modification has a role in multiple cellular functions, ranging from cell motility, cell cycle progression or cell differentiation to intracellular trafficking and signaling.

The protein resides in the cytoplasm. It is found in the cytoskeleton. It catalyses the reaction GTP + H2O = GDP + phosphate + H(+). Functionally, tubulin is the major constituent of microtubules, a cylinder consisting of laterally associated linear protofilaments composed of alpha- and beta-tubulin heterodimers. Microtubules grow by the addition of GTP-tubulin dimers to the microtubule end, where a stabilizing cap forms. Below the cap, tubulin dimers are in GDP-bound state, owing to GTPase activity of alpha-tubulin. In Homarus americanus (American lobster), this protein is Tubulin alpha-3 chain.